The primary structure comprises 976 residues: Vacuolar membrane protease (976 aa).

The Cytoplasmic portion of the chain corresponds to 1–15 (MKLKSVFRSVLKYRK). A helical transmembrane segment spans residues 16 to 36 (TNLSLLLLITYSIITLLYIFD). At 37–359 (HERYKLNLPK…KFFVISAKTL (323 aa)) the chain is on the vacuolar side. N-linked (GlcNAc...) asparagine glycosylation is found at asparagine 96 and asparagine 121. Zn(2+) is bound by residues histidine 156 and aspartate 168. Asparagine 189 carries N-linked (GlcNAc...) asparagine glycosylation. Catalysis depends on glutamate 200, which acts as the Proton acceptor. Position 201 (glutamate 201) interacts with Zn(2+). Residues asparagine 212 and asparagine 217 are each glycosylated (N-linked (GlcNAc...) asparagine). Zn(2+) contacts are provided by glutamate 226 and histidine 300. A helical membrane pass occupies residues 360-380 (FYWNCIFLLVSPVVAIGLYLI). The Cytoplasmic portion of the chain corresponds to 381–392 (SRDRMTWKSHSW). The helical transmembrane segment at 393–412 (LSWTRFPLSLAAGIIVQKLF) threads the bilayer. Topologically, residues 413-428 (SNDIIRSNPLTFSRNY) are vacuolar. A helical membrane pass occupies residues 429 to 449 (FWPISAFFTQVIFTSYVLINC). At 450–461 (SNFFFPCADMKS) the chain is on the cytoplasmic side. A helical transmembrane segment spans residues 462-482 (LSIIELFIILWTILLFTSKLL). Topologically, residues 483 to 496 (YSSDYRYTGLYPLS) are vacuolar. A helical transmembrane segment spans residues 497–517 (IFFLLSTIAAILRLLALALGM). Residues 518-627 (RTRKRLGREC…NSLKLEYTDY (110 aa)) are Cytoplasmic-facing. Positions 528–610 (RDHHSNYSSH…PLLKGSNSME (83 aa)) are disordered. The span at 549-558 (NLEQPQDQFT) shows a compositional bias: polar residues. The span at 559–570 (SSQDDQASIQDD) shows a compositional bias: low complexity. The segment covering 582 to 601 (NVDEDHGMDSSSQQHDERVP) has biased composition (basic and acidic residues). A helical membrane pass occupies residues 628-648 (AWIIQFLLIVPIPSFILFNSV). At 649–668 (DVIMDALNHTVQEGSKATFD) the chain is on the vacuolar side. Asparagine 656 carries N-linked (GlcNAc...) asparagine glycosylation. Residues 669–689 (VLRFGMVGSILMALPILPFFY) form a helical membrane-spanning segment. Topologically, residues 690–692 (KVN) are cytoplasmic. The chain crosses the membrane as a helical span at residues 693 to 713 (YITISLTALLFLISASKTLLV). At 714–976 (HPFTNSNPLK…LVIVKDAIIL (263 aa)) the chain is on the vacuolar side. 5 N-linked (GlcNAc...) asparagine glycosylation sites follow: asparagine 768, asparagine 796, asparagine 811, asparagine 866, and asparagine 937.

This sequence belongs to the peptidase M28 family. Zn(2+) serves as cofactor.

Its subcellular location is the vacuole membrane. Its function is as follows. May be involved in vacuolar sorting and osmoregulation. The protein is Vacuolar membrane protease of Saccharomyces cerevisiae (strain AWRI1631) (Baker's yeast).